The chain runs to 507 residues: Transmembrane protein 184 homolog DDB_G0276041 (507 aa).

Transmembrane regions (helical) follow at residues 13 to 33 (IVMLSIGSFFALGSIIIAVIL), 50 to 70 (IVRIIMIAPIYAIHSLLSLFF), 88 to 108 (AYVLYCFFKLLICFLGGEEAL), 141 to 161 (LGLVLQYAIIKPTLAIVAAIL), 179 to 199 (LWITVINNISVLIALYFLVMF), 222 to 242 (VVFFLFWQTVVITVLIWFDAL), and 260 to 280 (FLVCIEMFITSIAMGICFSYS). N-linked (GlcNAc...) asparagine glycosylation is found at Asn-360, Asn-375, Asn-470, Asn-473, Asn-477, and Asn-498. Residues 448–500 (NGASNNNNNNNNNNNNINNNNNNNSNNSNNNSNSQFESIDINSNSVNSNKNQS) are disordered. Positions 451–500 (SNNNNNNNNNNNNINNNNNNNSNNSNNNSNSQFESIDINSNSVNSNKNQS) are enriched in low complexity.

Belongs to the TMEM184 family.

The protein resides in the cell membrane. Probable transporter. This Dictyostelium discoideum (Social amoeba) protein is Transmembrane protein 184 homolog DDB_G0276041 (tmem184B).